We begin with the raw amino-acid sequence, 428 residues long: Sarcosine reductase complex component B subunit alpha (428 aa).

At Cys242 the chain carries Pyruvic acid (Cys).

As to quaternary structure, heterotetramer of two alpha and two beta subunits. Component of the sarcosine reductase complex, together with components A and C. PB is substrate specific. In terms of processing, the peptide chain is cleaved into beta and alpha chains, and the alpha chain N-terminal cysteine is deaminated and oxidized to form a reactive pyruvoyl group.

It carries out the reaction acetyl phosphate + methylamine + [thioredoxin]-disulfide + H2O = sarcosine + [thioredoxin]-dithiol + phosphate + H(+). In terms of biological role, in the first step of sarcosine reductase, the substrate is bound to component PB via a Schiff base intermediate. Then the PB-activated substrate is nucleophilically attacked by the selenol anion of component PA to transform it to a carboxymethylated selenoether and the respective amine. By action of component PC, acetyl phosphate is formed, leaving component PA in its oxidized state. Finally component PA becomes reduced by the thioredoxin system to start a new catalytic cycle of reductive deamination. This chain is Sarcosine reductase complex component B subunit alpha (grdG), found in Peptoclostridium acidaminophilum (Eubacterium acidaminophilum).